Consider the following 222-residue polypeptide: Charged multivesicular body protein 4b (222 aa).

2 disordered regions span residues 1–21 and 177–222; these read MSLI…PSPQ and NLLE…WATA. Positions 21-182 form a coiled coil; sequence QEAIQKLRDT…ELDKNLLEVQ (162 aa).

Belongs to the SNF7 family. Probable core component of the endosomal sorting required for transport complex III (ESCRT-III). ESCRT-III components are thought to multimerize to form a flat lattice on the perimeter membrane of the endosome.

It is found in the cytoplasm. It localises to the cytosol. Its subcellular location is the late endosome membrane. The protein resides in the midbody. Functionally, probable core component of the endosomal sorting required for transport complex III (ESCRT-III) which is involved in multivesicular bodies (MVBs) formation and sorting of endosomal cargo proteins into MVBs. MVBs contain intraluminal vesicles (ILVs) that are generated by invagination and scission from the limiting membrane of the endosome and mostly are delivered to lysosomes enabling degradation of membrane proteins, such as stimulated growth factor receptors, lysosomal enzymes and lipids. This Xenopus laevis (African clawed frog) protein is Charged multivesicular body protein 4b (chmp4b).